We begin with the raw amino-acid sequence, 606 residues long: WD repeat-containing protein 1 (606 aa).

WD repeat units lie at residues 4–45 (EIKK…LRNI), 48–87 (PAIA…IWDT), 93–135 (LLKY…LWDT), 138–176 (SVGE…FFEG), 180–218 (KFKF…IYDG), 224–263 (VCAL…IWDV), 270–306 (STFP…YLDK), 311–351 (KPLR…YWDS), 358–408 (SFSG…KLDV), 432–474 (LKDQ…VYSI), 480–518 (KDEG…VFSV), 523–561 (SENN…VWTL), and 566–604 (TKVK…EWTI). 4 positions are modified to N6-acetyllysine: Lys-28, Lys-81, Lys-95, and Lys-115. Position 238 is a phosphotyrosine (Tyr-238). The residue at position 480 (Lys-480) is an N6-acetyllysine.

The protein belongs to the WD repeat AIP1 family.

It localises to the cytoplasm. The protein localises to the cytoskeleton. It is found in the cell projection. Its subcellular location is the podosome. Its function is as follows. Induces disassembly of actin filaments in conjunction with ADF/cofilin family proteins. Enhances cofilin-mediated actin severing. Involved in cytokinesis. Involved in chemotactic cell migration by restricting lamellipodial membrane protrusions. Involved in myocardium sarcomere organization. Required for cardiomyocyte growth at the postnatal and maintenance at the adult stage. Involved in neutrophil actin dynamics and migration. Involved in megakaryocyte maturation and platelet shedding. Required for the establishment of planar cell polarity (PCP) during follicular epithelium development and for cell shape changes during PCP; the function seems to implicate cooperation with CFL1 and/or DSTN/ADF. Involved in the generation/maintenance of cortical tension. Involved in assembly and maintenance of epithelial apical cell junctions and plays a role in the organization of the perijunctional actomyosin belt. The protein is WD repeat-containing protein 1 (Wdr1) of Mus musculus (Mouse).